A 642-amino-acid chain; its full sequence is Threonine--tRNA ligase (642 aa).

In terms of domain architecture, TGS spans 1–61 (MPVIRFYDGS…REDAFIEFVD (61 aa)). The interval 243-534 (DHRKIGKFLQ…LIEECSGNLP (292 aa)) is catalytic. Residues Cys334, His385, and His511 each contribute to the Zn(2+) site.

It belongs to the class-II aminoacyl-tRNA synthetase family. In terms of assembly, homodimer. Requires Zn(2+) as cofactor.

The protein resides in the cytoplasm. The enzyme catalyses tRNA(Thr) + L-threonine + ATP = L-threonyl-tRNA(Thr) + AMP + diphosphate + H(+). Functionally, catalyzes the attachment of threonine to tRNA(Thr) in a two-step reaction: L-threonine is first activated by ATP to form Thr-AMP and then transferred to the acceptor end of tRNA(Thr). Also edits incorrectly charged L-seryl-tRNA(Thr). The protein is Threonine--tRNA ligase of Buchnera aphidicola subsp. Acyrthosiphon pisum (strain APS) (Acyrthosiphon pisum symbiotic bacterium).